A 175-amino-acid polypeptide reads, in one-letter code: Co-chaperone protein HscB homolog (175 aa).

Positions 7–79 (SHFELFHLPA…LKRATYLLHL (73 aa)) constitute a J domain.

It belongs to the HscB family. As to quaternary structure, interacts with HscA and stimulates its ATPase activity.

Its function is as follows. Co-chaperone involved in the maturation of iron-sulfur cluster-containing proteins. Seems to help targeting proteins to be folded toward HscA. This is Co-chaperone protein HscB homolog from Burkholderia thailandensis (strain ATCC 700388 / DSM 13276 / CCUG 48851 / CIP 106301 / E264).